Here is a 1574-residue protein sequence, read N- to C-terminus: DNA-directed RNA polymerase subunit beta' (1574 aa).

Zn(2+) is bound by residues C64, C66, C79, and C82. Residues D590, D592, and D594 each coordinate Mg(2+). Zn(2+) contacts are provided by C928, C1002, C1009, and C1012.

The protein belongs to the RNA polymerase beta' chain family. In terms of assembly, the RNAP catalytic core consists of 2 alpha, 1 beta, 1 beta' and 1 omega subunit. When a sigma factor is associated with the core the holoenzyme is formed, which can initiate transcription. Requires Mg(2+) as cofactor. Zn(2+) is required as a cofactor.

It carries out the reaction RNA(n) + a ribonucleoside 5'-triphosphate = RNA(n+1) + diphosphate. In terms of biological role, DNA-dependent RNA polymerase catalyzes the transcription of DNA into RNA using the four ribonucleoside triphosphates as substrates. This is DNA-directed RNA polymerase subunit beta' from Aquifex aeolicus (strain VF5).